Here is a 60-residue protein sequence, read N- to C-terminus: Rubredoxin 4 (60 aa).

Positions 4–55 constitute a Rubredoxin-like domain; sequence YKLYQCAQCGFEYDEAVGWPEDGIEPGTRWDDIPEDWSCPDCGAAKSDFFMV. Positions 9, 12, 42, and 45 each coordinate Fe cation.

The protein belongs to the rubredoxin family. It depends on Fe(3+) as a cofactor.

In terms of biological role, involved in the hydrocarbon hydroxylating system, which transfers electrons from NADH to rubredoxin reductase and then through rubredoxin to alkane 1 monooxygenase. In Rhodococcus sp. (strain Q15), this protein is Rubredoxin 4 (rubA4).